The chain runs to 195 residues: PBAN-type neuropeptides (195 aa).

A signal peptide spans 1–33 (MIGFAVFSSFNRFTTIFVCVLLCVVYLLSYASG). Residues 34–63 (EYDGRDSSSGSNNDRAPSNEFGSCTDGKCI) constitute a propeptide that is removed on maturation. Leucine amide is present on L80. Positions 86–117 (ADRKPEINSDIEAFANAFEEPHWAIVTIPETE) are excised as a propeptide. Q120 carries the pyrrolidone carboxylic acid modification. Residue L128 is modified to Leucine amide. Residues 131–153 (ESGEDYFSYGFPKDQEELYTEEQ) constitute a propeptide that is removed on maturation. A leucine amide mark is found at L163 and L175. The propeptide occupies 178 to 195 (QLHNIVDKPRQNFNDPRF).

The protein belongs to the pyrokinin family.

The protein localises to the secreted. Its function is as follows. A hormone that controls sex pheromone production in females and pheromone responsiveness in male. Also mediates visceral muscle contractile activity (myotropic activity). The chain is PBAN-type neuropeptides from Apis mellifera (Honeybee).